The primary structure comprises 56 residues: Large ribosomal subunit protein bL32 (56 aa).

Belongs to the bacterial ribosomal protein bL32 family.

The sequence is that of Large ribosomal subunit protein bL32 from Brevibacillus brevis (strain 47 / JCM 6285 / NBRC 100599).